Reading from the N-terminus, the 330-residue chain is Ketol-acid reductoisomerase (NADP(+)) (330 aa).

The 182-residue stretch at 3–184 (LPVYYDKDID…GGGRMGVLKT (182 aa)) folds into the KARI N-terminal Rossmann domain. NADP(+)-binding positions include 26–29 (YGAQ), Ser52, and Ser54. The active site involves His109. Gly135 contributes to the NADP(+) binding site. Residues 185-329 (SFKEECESDL…EILRAPFNHK (145 aa)) form the KARI C-terminal knotted domain. 4 residues coordinate Mg(2+): Asp193, Glu197, Glu229, and Glu233. Residue Ser254 coordinates substrate.

This sequence belongs to the ketol-acid reductoisomerase family. Mg(2+) is required as a cofactor.

The enzyme catalyses (2R)-2,3-dihydroxy-3-methylbutanoate + NADP(+) = (2S)-2-acetolactate + NADPH + H(+). The catalysed reaction is (2R,3R)-2,3-dihydroxy-3-methylpentanoate + NADP(+) = (S)-2-ethyl-2-hydroxy-3-oxobutanoate + NADPH + H(+). It functions in the pathway amino-acid biosynthesis; L-isoleucine biosynthesis; L-isoleucine from 2-oxobutanoate: step 2/4. The protein operates within amino-acid biosynthesis; L-valine biosynthesis; L-valine from pyruvate: step 2/4. Functionally, involved in the biosynthesis of branched-chain amino acids (BCAA). Catalyzes an alkyl-migration followed by a ketol-acid reduction of (S)-2-acetolactate (S2AL) to yield (R)-2,3-dihydroxy-isovalerate. In the isomerase reaction, S2AL is rearranged via a Mg-dependent methyl migration to produce 3-hydroxy-3-methyl-2-ketobutyrate (HMKB). In the reductase reaction, this 2-ketoacid undergoes a metal-dependent reduction by NADPH to yield (R)-2,3-dihydroxy-isovalerate. The polypeptide is Ketol-acid reductoisomerase (NADP(+)) (Helicobacter pylori (strain HPAG1)).